Consider the following 90-residue polypeptide: DNA-directed RNA polymerase subunit omega (90 aa).

The tract at residues 70 to 90 is disordered; that stretch reads QEQQEQEAAELAAVSSIMHNR.

The protein belongs to the RNA polymerase subunit omega family. As to quaternary structure, the RNAP catalytic core consists of 2 alpha, 1 beta, 1 beta' and 1 omega subunit. When a sigma factor is associated with the core the holoenzyme is formed, which can initiate transcription.

It catalyses the reaction RNA(n) + a ribonucleoside 5'-triphosphate = RNA(n+1) + diphosphate. Promotes RNA polymerase assembly. Latches the N- and C-terminal regions of the beta' subunit thereby facilitating its interaction with the beta and alpha subunits. In Vibrio cholerae serotype O1 (strain ATCC 39541 / Classical Ogawa 395 / O395), this protein is DNA-directed RNA polymerase subunit omega.